The sequence spans 433 residues: Dihydroorotase (433 aa).

Zn(2+) contacts are provided by histidine 63 and histidine 65. Residues 65-67 and asparagine 97 each bind substrate; that span reads HLR. The Zn(2+) site is built by aspartate 155, histidine 182, and histidine 235. Position 283 (asparagine 283) interacts with substrate. Aspartate 310 serves as a coordination point for Zn(2+). Aspartate 310 is an active-site residue. Position 314 (histidine 314) interacts with substrate.

It belongs to the metallo-dependent hydrolases superfamily. DHOase family. Class I DHOase subfamily. Requires Zn(2+) as cofactor.

It catalyses the reaction (S)-dihydroorotate + H2O = N-carbamoyl-L-aspartate + H(+). It participates in pyrimidine metabolism; UMP biosynthesis via de novo pathway; (S)-dihydroorotate from bicarbonate: step 3/3. Catalyzes the reversible cyclization of carbamoyl aspartate to dihydroorotate. The sequence is that of Dihydroorotase from Anaeromyxobacter dehalogenans (strain 2CP-1 / ATCC BAA-258).